We begin with the raw amino-acid sequence, 282 residues long: Elongation factor Ts (282 aa).

An involved in Mg(2+) ion dislocation from EF-Tu region spans residues 79 to 82 (TDFV).

It belongs to the EF-Ts family.

Its subcellular location is the cytoplasm. Functionally, associates with the EF-Tu.GDP complex and induces the exchange of GDP to GTP. It remains bound to the aminoacyl-tRNA.EF-Tu.GTP complex up to the GTP hydrolysis stage on the ribosome. The sequence is that of Elongation factor Ts from Colwellia psychrerythraea (strain 34H / ATCC BAA-681) (Vibrio psychroerythus).